The following is a 492-amino-acid chain: N-succinylglutamate 5-semialdehyde dehydrogenase (492 aa).

220–225 (GSASTG) contacts NAD(+). Catalysis depends on residues Glu-243 and Cys-277.

The protein belongs to the aldehyde dehydrogenase family. AstD subfamily.

It carries out the reaction N-succinyl-L-glutamate 5-semialdehyde + NAD(+) + H2O = N-succinyl-L-glutamate + NADH + 2 H(+). Its pathway is amino-acid degradation; L-arginine degradation via AST pathway; L-glutamate and succinate from L-arginine: step 4/5. Catalyzes the NAD-dependent reduction of succinylglutamate semialdehyde into succinylglutamate. This Salmonella heidelberg (strain SL476) protein is N-succinylglutamate 5-semialdehyde dehydrogenase.